A 637-amino-acid polypeptide reads, in one-letter code: tRNA 5-methylaminomethyl-2-thiouridine biosynthesis bifunctional protein MnmC (637 aa).

The segment at 1 to 232 is tRNA (mnm(5)s(2)U34)-methyltransferase; sequence MPERIEWLED…KRDNLQGEFN (232 aa). Residues 255 to 637 are FAD-dependent cmnm(5)s(2)U34 oxidoreductase; sequence IGAGLAGAAV…YGEAKLVSED (383 aa).

This sequence in the N-terminal section; belongs to the methyltransferase superfamily. tRNA (mnm(5)s(2)U34)-methyltransferase family. In the C-terminal section; belongs to the DAO family. FAD is required as a cofactor.

The protein localises to the cytoplasm. It catalyses the reaction 5-aminomethyl-2-thiouridine(34) in tRNA + S-adenosyl-L-methionine = 5-methylaminomethyl-2-thiouridine(34) in tRNA + S-adenosyl-L-homocysteine + H(+). Its function is as follows. Catalyzes the last two steps in the biosynthesis of 5-methylaminomethyl-2-thiouridine (mnm(5)s(2)U) at the wobble position (U34) in tRNA. Catalyzes the FAD-dependent demodification of cmnm(5)s(2)U34 to nm(5)s(2)U34, followed by the transfer of a methyl group from S-adenosyl-L-methionine to nm(5)s(2)U34, to form mnm(5)s(2)U34. The protein is tRNA 5-methylaminomethyl-2-thiouridine biosynthesis bifunctional protein MnmC of Polaromonas sp. (strain JS666 / ATCC BAA-500).